Consider the following 1819-residue polypeptide: Gamma-tubulin complex component 6 (1819 aa).

3 disordered regions span residues 810–889 (SEAH…GARP), 929–951 (LPPS…PQEY), and 1000–1023 (RETL…QPTE). Tandem repeats lie at residues 1027 to 1053 (GQVS…WNTH), 1054 to 1080 (GHVS…WNTH), 1081 to 1107 (GHVS…WNIH), 1108 to 1134 (GHVS…WNTH), 1135 to 1161 (GHVS…WNTH), 1162 to 1188 (GHVS…WNTH), 1189 to 1215 (GHVS…WNTH), 1216 to 1242 (GHVS…CNTH), and 1243 to 1269 (GHVS…WNTH). Positions 1027-1269 (GQVSGGGLPT…VSTRPRWNTH (243 aa)) are 9 X 27 AA tandem repeats. A disordered region spans residues 1271 to 1412 (PIPPPHMVLG…EAEASAAEAQ (142 aa)). The span at 1297-1314 (PPGHTSQSALSLGAQSTV) shows a compositional bias: polar residues. Low complexity predominate over residues 1321 to 1335 (LPVEVGPSLSSPSSG). Residues 1384–1398 (WPLNSQEDTAAQSSP) are compositionally biased toward polar residues.

The protein belongs to the TUBGCP family. As to quaternary structure, component of the gamma-tubulin ring complex (gTuRC) consisting of TUBGCP2, TUBGCP3, TUBGCP4, TUBGCP5 and TUBGCP6 and gamma-tubulin TUBG1 or TUBG2. TUBGCP2, TUBGCP3, TUBGCP4, TUBGCP5 and TUBGCP6 assemble in a 5:5:2:1:1 stoichiometry; each is associated with a gamma-tubulin, thereby arranging 14 gamma-tubulins in a helical manner. Gamma-tubulin at the first position is blocked by TUBGCP3 at the last position, allowing 13 protafilaments to grow into a microtubule. The gTuRC (via TUBGCP3 and TUBGCP6) interacts with ACTB and MZT1; the interactions form a luminal bridge that stabilizes the initial structure during complex assembly. The gTuRC (via TUBGCP2) interacts with MZT2A/MZT2B and CDK5RAP2 (via CM1 motif); the interactions play a role in gTuRC activation.

It localises to the cytoplasm. The protein localises to the cytoskeleton. The protein resides in the microtubule organizing center. Its subcellular location is the centrosome. Its function is as follows. Component of the gamma-tubulin ring complex (gTuRC) which mediates microtubule nucleation. The gTuRC regulates the minus-end nucleation of alpha-beta tubulin heterodimers that grow into microtubule protafilaments, a critical step in centrosome duplication and spindle formation. The chain is Gamma-tubulin complex component 6 (TUBGCP6) from Homo sapiens (Human).